Consider the following 289-residue polypeptide: Bifunctional aminodeoxychorismate lyase / D-amino acid transaminase (289 aa).

R50 is a binding site for pyridoxal 5'-phosphate. Residue K149 is modified to N6-(pyridoxal phosphate)lysine. Pyridoxal 5'-phosphate contacts are provided by Y153, T216, and T217. S252 is a 2-oxoglutarate binding site. Residue S253 participates in pyridoxal 5'-phosphate binding. 2 residues coordinate 2-oxoglutarate: M254 and T255.

This sequence belongs to the class-IV pyridoxal-phosphate-dependent aminotransferase family. Homodimer. Pyridoxal 5'-phosphate is required as a cofactor.

It catalyses the reaction 4-amino-4-deoxychorismate = 4-aminobenzoate + pyruvate + H(+). The enzyme catalyses D-alanine + 2-oxoglutarate = D-glutamate + pyruvate. It functions in the pathway cofactor biosynthesis; tetrahydrofolate biosynthesis; 4-aminobenzoate from chorismate: step 2/2. It participates in cell wall biogenesis; peptidoglycan biosynthesis. Functionally, bifunctional enzyme that catalyzes two enzymatic reactions in biochemically unrelated pathways: acts as an aminodeoxychorismate (ADC) lyase (ADCL) in folate biosynthesis, converting 4-amino-4-deoxychorismate (ADC) to 4-aminobenzoate (PABA), and as a D-amino acid transaminase (DAAT) in peptidoglycan (PG) biosynthesis. DAAT activity is strictly restricted to D-alanine and D-glutamate. May function as a metabolic toggle that alternates between ADCL and DAAT activity, prioritizing the former over the latter in response to substrate accumulation. Bifunctionality of this enzyme provides a failsafe mechanism for a metabolic coupling between nucleic acid and cell wall biosynthesis that appears to ensure prioritization of PABA production over D-alanine/D-glutamate biosynthesis. The polypeptide is Bifunctional aminodeoxychorismate lyase / D-amino acid transaminase (Mycobacterium tuberculosis (strain ATCC 25618 / H37Rv)).